The chain runs to 1463 residues: DNA polymerase III PolC-type (1463 aa).

In terms of domain architecture, Exonuclease spans 425-581 (YVVFDVETTG…YDAEATGRLL (157 aa)).

It belongs to the DNA polymerase type-C family. PolC subfamily.

The protein localises to the cytoplasm. It catalyses the reaction DNA(n) + a 2'-deoxyribonucleoside 5'-triphosphate = DNA(n+1) + diphosphate. In terms of biological role, required for replicative DNA synthesis. This DNA polymerase also exhibits 3' to 5' exonuclease activity. The protein is DNA polymerase III PolC-type of Streptococcus pneumoniae serotype 2 (strain D39 / NCTC 7466).